Consider the following 584-residue polypeptide: Delta 8-(E)-sphingolipid desaturase (584 aa).

Residues 7–82 (KKIFTRSQII…FTRFKIGEIE (76 aa)) enclose the Cytochrome b5 heme-binding domain. Residues H42 and H65 each contribute to the heme site. Residues 109-134 (NKNTSNKKTLDSKLDNDSSNSTSDLE) are disordered. Residues 261–281 (LFLYSLSFLKINQLFLSAVFM) traverse the membrane as a helical segment. Positions 293–297 (HDAGH) match the Histidine box-1 motif. The chain crosses the membrane as a helical span at residues 306-326 (IDNIFGMLIADWFGGLSLGWW). The short motif at 330–334 (HNVHH) is the Histidine box-2 element. 3 consecutive transmembrane segments (helical) span residues 386–403 (YLYYPILCFGRFNLYRLS), 423–443 (YFEFFGLSFFFYWFFYLLVFK), and 455–475 (VMVSHITTMLVHVQITLSHFA). The Histidine box-3 signature appears at 514-518 (QAIHH).

The protein belongs to the fatty acid desaturase type 1 family.

The protein localises to the membrane. It carries out the reaction an N-acylsphing-4-enine + 2 Fe(II)-[cytochrome b5] + O2 + 2 H(+) = a (4E,8E)-4-sphinga-4,8-dienine ceramide + 2 Fe(III)-[cytochrome b5] + 2 H2O. The protein operates within lipid metabolism; sphingolipid metabolism. In terms of biological role, delta(8)-fatty-acid desaturase which introduces a double bond at the 8-position in the long-chain base (LCB) of ceramides. Required for the formation of the di-unsaturated sphingoid base (E,E)-sphinga-4,8-dienine during glucosylceramide (GluCer) biosynthesis. In Candida albicans (strain SC5314 / ATCC MYA-2876) (Yeast), this protein is Delta 8-(E)-sphingolipid desaturase.